A 515-amino-acid polypeptide reads, in one-letter code: N-fatty-acyl-amino acid synthase/hydrolase PM20D1.1 (515 aa).

An N-terminal signal peptide occupies residues Met1–Gly34. Asn50, Asn87, and Asn118 each carry an N-linked (GlcNAc...) asparagine glycan. Residue His140 participates in Zn(2+) binding. Asp142 is a catalytic residue. Asp173 lines the Zn(2+) pocket. The active-site Proton acceptor is the Glu207. The Zn(2+) site is built by Glu208, Asp234, and His480.

Belongs to the peptidase M20A family. Zn(2+) serves as cofactor.

The protein resides in the secreted. The catalysed reaction is an N-acyl-L-amino acid + H2O = an L-alpha-amino acid + a carboxylate. The enzyme catalyses an N-acyl-aromatic L-alpha-amino acid + H2O = an aromatic L-alpha-amino acid + a carboxylate. It carries out the reaction N-(5Z,8Z,11Z,14Z)-eicosatetraenoyl-glycine + H2O = (5Z,8Z,11Z,14Z)-eicosatetraenoate + glycine. It catalyses the reaction N-hexadecanoyl-L-phenylalanine + H2O = hexadecanoate + L-phenylalanine. The catalysed reaction is N-octadecanoyl-L-phenylalanine + H2O = octadecanoate + L-phenylalanine. The enzyme catalyses N-(4Z,7Z,10Z,13Z,16Z,19Z-docosahexaenoyl)-L-phenylalanine + H2O = (4Z,7Z,10Z,13Z,16Z,19Z)-docosahexaenoate + L-phenylalanine. It carries out the reaction N-(9Z-octadecenoyl)-L-asparagine + H2O = L-asparagine + (9Z)-octadecenoate. It catalyses the reaction (9Z)-octadecenoate + glycine = N-(9Z-octadecenoyl)glycine + H2O. The catalysed reaction is N-(9Z-octadecenoyl)-L-lysine + H2O = L-lysine + (9Z)-octadecenoate. The enzyme catalyses N-(9Z-octadecenoyl)-L-methionine + H2O = (9Z)-octadecenoate + L-methionine. It carries out the reaction N-(9Z-octadecenoyl)-L-serine + H2O = L-serine + (9Z)-octadecenoate. It catalyses the reaction N-(9Z-octadecenoyl)-L-tryptophan + H2O = L-tryptophan + (9Z)-octadecenoate. The catalysed reaction is N-(9Z-octadecenoyl)-L-tyrosine + H2O = L-tyrosine + (9Z)-octadecenoate. The enzyme catalyses N-(9Z-octadecenoyl)-L-glutamine + H2O = L-glutamine + (9Z)-octadecenoate. It carries out the reaction N-(5Z,8Z,11Z,14Z-eicosatetraenoyl)-L-serine + H2O = (5Z,8Z,11Z,14Z)-eicosatetraenoate + L-serine. It catalyses the reaction (5Z,8Z,11Z,14Z)-eicosatetraenoate + L-phenylalanine = N-(5Z,8Z,11Z,14Z-eicosatetraenoyl)-L-phenylalanine + H2O. The catalysed reaction is N-(9Z-octadecenoyl)-L-leucine + H2O = L-leucine + (9Z)-octadecenoate. The enzyme catalyses L-phenylalanine + (9Z)-octadecenoate = N-(9Z-octadecenoyl)-L-phenylalanine + H2O. It functions in the pathway amino-acid metabolism. The protein operates within energy metabolism; electron transfer. Its pathway is lipid metabolism; fatty acid metabolism. Its activity is regulated as follows. Lipoproteins are powerful coactivators of PM20D1 activity in vitro and NAA biosynthesis in vivo. In terms of biological role, secreted enzyme that regulates the endogenous N-fatty acyl amino acid (NAAs) tissue and circulating levels by functioning as a bidirectional NAA synthase/hydrolase. It condenses free fatty acids and free amino acids to generate NAAs and bidirectionally catalyzes the reverse hydrolysis reaction. Some of these NAAs stimulate oxidative metabolism via mitochondrial uncoupling, increasing energy expenditure in a UPC1-independent manner. Thereby, this secreted protein may indirectly regulate whole body energy expenditure. PM20D1 circulates in tight association with both low- and high-density (LDL and HDL,respectively) lipoprotein particles. The sequence is that of N-fatty-acyl-amino acid synthase/hydrolase PM20D1.1 from Danio rerio (Zebrafish).